The following is a 141-amino-acid chain: Large ribosomal subunit protein uL22 (141 aa).

It belongs to the universal ribosomal protein uL22 family. In terms of assembly, part of the 50S ribosomal subunit.

Its function is as follows. This protein binds specifically to 23S rRNA; its binding is stimulated by other ribosomal proteins, e.g. L4, L17, and L20. It is important during the early stages of 50S assembly. It makes multiple contacts with different domains of the 23S rRNA in the assembled 50S subunit and ribosome. The globular domain of the protein is located near the polypeptide exit tunnel on the outside of the subunit, while an extended beta-hairpin is found that lines the wall of the exit tunnel in the center of the 70S ribosome. The polypeptide is Large ribosomal subunit protein uL22 (Frankia casuarinae (strain DSM 45818 / CECT 9043 / HFP020203 / CcI3)).